Here is a 209-residue protein sequence, read N- to C-terminus: Uracil phosphoribosyltransferase (209 aa).

Residues arginine 79, arginine 104, and 131–139 (DPMLATGGS) each bind 5-phospho-alpha-D-ribose 1-diphosphate. Uracil contacts are provided by residues valine 194 and 199–201 (GDA). 5-phospho-alpha-D-ribose 1-diphosphate is bound at residue aspartate 200.

Belongs to the UPRTase family. It depends on Mg(2+) as a cofactor.

It catalyses the reaction UMP + diphosphate = 5-phospho-alpha-D-ribose 1-diphosphate + uracil. Its pathway is pyrimidine metabolism; UMP biosynthesis via salvage pathway; UMP from uracil: step 1/1. Its activity is regulated as follows. Allosterically activated by GTP. In terms of biological role, catalyzes the conversion of uracil and 5-phospho-alpha-D-ribose 1-diphosphate (PRPP) to UMP and diphosphate. The polypeptide is Uracil phosphoribosyltransferase (Bacillus mycoides (strain KBAB4) (Bacillus weihenstephanensis)).